The chain runs to 338 residues: Fructose-bisphosphate aldolase (338 aa).

2 residues coordinate substrate: arginine 50 and lysine 138. Catalysis depends on glutamate 179, which acts as the Proton acceptor. Catalysis depends on lysine 221, which acts as the Schiff-base intermediate with dihydroxyacetone-P.

It belongs to the class I fructose-bisphosphate aldolase family.

It catalyses the reaction beta-D-fructose 1,6-bisphosphate = D-glyceraldehyde 3-phosphate + dihydroxyacetone phosphate. It participates in carbohydrate degradation; glycolysis; D-glyceraldehyde 3-phosphate and glycerone phosphate from D-glucose: step 4/4. This Encephalitozoon cuniculi (strain GB-M1) (Microsporidian parasite) protein is Fructose-bisphosphate aldolase.